We begin with the raw amino-acid sequence, 607 residues long: Oligoendopeptidase F homolog (607 aa).

Residue H384 coordinates Zn(2+). Residue E385 is part of the active site. 2 residues coordinate Zn(2+): H388 and H391.

Belongs to the peptidase M3B family. Zn(2+) is required as a cofactor.

This chain is Oligoendopeptidase F homolog (pepF), found in Mycoplasma genitalium (strain ATCC 33530 / DSM 19775 / NCTC 10195 / G37) (Mycoplasmoides genitalium).